A 152-amino-acid chain; its full sequence is UPF0336 protein Tfu_2666 (152 aa).

Residues 7–116 enclose the MaoC-like domain; sequence YLGRAYELPE…TTITDIKSLA (110 aa).

It belongs to the UPF0336 family.

The chain is UPF0336 protein Tfu_2666 from Thermobifida fusca (strain YX).